The sequence spans 89 residues: Small ribosomal subunit protein uS15 (89 aa).

Belongs to the universal ribosomal protein uS15 family. Part of the 30S ribosomal subunit. Forms a bridge to the 50S subunit in the 70S ribosome, contacting the 23S rRNA.

Its function is as follows. One of the primary rRNA binding proteins, it binds directly to 16S rRNA where it helps nucleate assembly of the platform of the 30S subunit by binding and bridging several RNA helices of the 16S rRNA. Functionally, forms an intersubunit bridge (bridge B4) with the 23S rRNA of the 50S subunit in the ribosome. The sequence is that of Small ribosomal subunit protein uS15 from Corynebacterium glutamicum (strain R).